Consider the following 214-residue polypeptide: Ribosomal protein uL16-like (214 aa).

The protein belongs to the universal ribosomal protein uL16 family. In terms of assembly, component of a male germ cell-specific 60S large ribosomal subunit (LSU), which contains RPL10L and RPL39L, instead of RPL10 and RPL39 paralogs. The composition of the rest of the complex is similar to classical ribosomes. As to expression, almost testis-specific. Also expressed in pre- and postmenopausal ovary.

The protein resides in the cytoplasm. Testis-specific component of the ribosome, which is required for the transition from prophase to metaphase in male meiosis I. Compensates for the inactivated X-linked RPL10 paralog during spermatogenesis. The ribosome is a large ribonucleoprotein complex responsible for the synthesis of proteins in the cell. The male germ cell-specific ribosome displays a ribosomal polypeptide exit tunnel of distinct size and charge states compared with the classical ribosome. It is responsible for regulating the biosynthesis and folding of a subset of male germ-cell-specific proteins that are essential for the formation of sperm. The chain is Ribosomal protein uL16-like from Homo sapiens (Human).